A 532-amino-acid polypeptide reads, in one-letter code: Probable 1,4-beta-D-glucan cellobiohydrolase B (532 aa).

The signal sequence occupies residues methionine 1–alanine 26. The interval glutamine 27 to serine 461 is catalytic. The Nucleophile role is filled by glutamate 238. The active-site Proton donor is glutamate 243. Residue asparagine 296 is glycosylated (N-linked (GlcNAc...) asparagine). The segment at threonine 462 to threonine 495 is disordered. The thr-rich linker stretch occupies residues threonine 462 to glycine 496. Over residues threonine 475–glycine 490 the composition is skewed to low complexity. Positions glycine 496–leucine 532 constitute a CBM1 domain. 2 disulfides stabilise this stretch: cysteine 504–cysteine 521 and cysteine 515–cysteine 531.

The protein belongs to the glycosyl hydrolase 7 (cellulase C) family.

It localises to the secreted. The enzyme catalyses Hydrolysis of (1-&gt;4)-beta-D-glucosidic linkages in cellulose and cellotetraose, releasing cellobiose from the non-reducing ends of the chains.. The biological conversion of cellulose to glucose generally requires three types of hydrolytic enzymes: (1) Endoglucanases which cut internal beta-1,4-glucosidic bonds; (2) Exocellobiohydrolases that cut the disaccharide cellobiose from the non-reducing end of the cellulose polymer chain; (3) Beta-1,4-glucosidases which hydrolyze the cellobiose and other short cello-oligosaccharides to glucose. In Aspergillus fumigatus (strain CBS 144.89 / FGSC A1163 / CEA10) (Neosartorya fumigata), this protein is Probable 1,4-beta-D-glucan cellobiohydrolase B (cbhB).